We begin with the raw amino-acid sequence, 478 residues long: ATP synthase subunit beta (478 aa).

An ATP-binding site is contributed by 160-167; sequence GGAGVGKT.

Belongs to the ATPase alpha/beta chains family. As to quaternary structure, F-type ATPases have 2 components, CF(1) - the catalytic core - and CF(0) - the membrane proton channel. CF(1) has five subunits: alpha(3), beta(3), gamma(1), delta(1), epsilon(1). CF(0) has three main subunits: a(1), b(2) and c(9-12). The alpha and beta chains form an alternating ring which encloses part of the gamma chain. CF(1) is attached to CF(0) by a central stalk formed by the gamma and epsilon chains, while a peripheral stalk is formed by the delta and b chains.

Its subcellular location is the cell inner membrane. It carries out the reaction ATP + H2O + 4 H(+)(in) = ADP + phosphate + 5 H(+)(out). Functionally, produces ATP from ADP in the presence of a proton gradient across the membrane. The catalytic sites are hosted primarily by the beta subunits. This Orientia tsutsugamushi (strain Ikeda) (Rickettsia tsutsugamushi) protein is ATP synthase subunit beta.